The following is a 342-amino-acid chain: Isopentenyl-diphosphate delta-isomerase (342 aa).

11–12 lines the substrate pocket; sequence RK. FMN is bound by residues Ser68, 69–71, Ser99, and Asn128; that span reads SMT. 99 to 101 is a binding site for substrate; it reads SQR. A substrate-binding site is contributed by Gln162. Residue Glu163 coordinates Mg(2+). FMN-binding positions include Lys194, Ser219, Thr224, 275–277, and 296–297; these read GVR and AK.

It belongs to the IPP isomerase type 2 family. Homooctamer. Dimer of tetramers. It depends on FMN as a cofactor. NADPH is required as a cofactor. Requires Mg(2+) as cofactor.

Its subcellular location is the cytoplasm. It catalyses the reaction isopentenyl diphosphate = dimethylallyl diphosphate. Its function is as follows. Involved in the biosynthesis of isoprenoids. Catalyzes the 1,3-allylic rearrangement of the homoallylic substrate isopentenyl (IPP) to its allylic isomer, dimethylallyl diphosphate (DMAPP). This is Isopentenyl-diphosphate delta-isomerase from Legionella pneumophila (strain Corby).